Here is a 70-residue protein sequence, read N- to C-terminus: Putative venom toxin Ts29 (70 aa).

Residues 1-20 (MSPLFVVLLIATTTFYHSDA) form the signal peptide.

In terms of tissue distribution, expressed by the venom gland.

The protein localises to the secreted. This chain is Putative venom toxin Ts29, found in Tityus serrulatus (Brazilian scorpion).